Reading from the N-terminus, the 338-residue chain is Starch-binding domain-containing protein 1 (338 aa).

At methionine 1–serine 6 the chain is on the extracellular side. A helical transmembrane segment spans residues alanine 7–leucine 23. The Cytoplasmic portion of the chain corresponds to arginine 24–histidine 338. 2 disordered regions span residues proline 30 to valine 73 and lysine 120 to proline 148. A compositionally biased stretch (low complexity) spans alanine 36–glycine 52. The segment covering aspartate 53–glycine 62 has biased composition (gly residues). Position 68 is a phosphoserine (serine 68). A compositionally biased stretch (basic and acidic residues) spans proline 122–alanine 132. Phosphoserine occurs at positions 140, 167, and 179. An LIR motif is present at residues histidine 185–valine 191. Serine 195, serine 196, serine 205, serine 209, serine 212, serine 220, and serine 223 each carry phosphoserine. Residues serine 238 to isoleucine 337 enclose the CBM20 domain.

Interacts with the ATG8 family proteins GABARAP and GABARAPL1. Interacts with several glycogen-associated proteins, such as GYS2 (liver glycogen synthase), GDE (glycogen debranching enzyme), GBE1 (glycogen branching enzyme 1) and EPM2A (Laforin). In terms of processing, ubiquitinated, which leads to proteasomal degradation. Expressed at high level in glycogen-accumulating organs such as muscle and liver. Trace signals are also found in brain, kidney, and pancreas.

The protein localises to the preautophagosomal structure membrane. It localises to the endoplasmic reticulum membrane. Its subcellular location is the cell membrane. The protein resides in the sarcolemma. It is found in the T-tubule. Acts as a cargo receptor for glycogen. Delivers its cargo to an autophagic pathway called glycophagy, resulting in the transport of glycogen to lysosomes. This chain is Starch-binding domain-containing protein 1, found in Mus musculus (Mouse).